Reading from the N-terminus, the 15281-residue chain is Cyclosporin synthetase simA (15281 aa).

A condensation 1 region spans residues 34-463 (SFAQGRLWFL…AVHVKTMPLT (430 aa)). Positions 513-918 (SYSELDHKSD…NSDQVRDAAV (406 aa)) are adenylation 1. The 75-residue stretch at 1026-1100 (APRNEIEAVL…DLAATIQRGS (75 aa)) folds into the Carrier 1 domain. Serine 1060 carries the O-(pantetheine 4'-phosphoryl)serine modification. A condensation 2 region spans residues 1118–1549 (SFAQGRLWFL…QTPIMTMPLT (432 aa)). An adenylation 2 region spans residues 1599–2004 (SYAELDQRSD…SSAGVHDAVV (406 aa)). The segment at 2067 to 2251 (SWTSMYDGTL…LEELEEELLV (185 aa)) is methyltransferase (M) domain 1. Positions 2524–2598 (APRDSIEAII…DLAATIQQDT (75 aa)) constitute a Carrier 2 domain. Serine 2558 is modified (O-(pantetheine 4'-phosphoryl)serine). The interval 2616 to 3044 (SFAQGRLWFL…EPDMPVASMA (429 aa)) is condensation 3. Residues 3096–3498 (SYADLDRKSD…SHDLVTDAAV (403 aa)) form an adenylation 3 region. The segment at 3562 to 3749 (SMYDGSLIKK…EDELLVDPAF (188 aa)) is methyltransferase (M) domain 2. One can recognise a Carrier 3 domain in the interval 4011-4085 (APRTEIERVL…DLVLIVQQGS (75 aa)). Serine 4045 is modified (O-(pantetheine 4'-phosphoryl)serine). A condensation 4 region spans residues 4100 to 4530 (VPQSFAQGRL…GPDVPISTLP (431 aa)). The adenylation 4 stretch occupies residues 4582 to 4986 (SYAQLDRESD…FLNDGFVEDV (405 aa)). Positions 5052 to 5241 (TSMYDGTEID…ELLVDPAFFT (190 aa)) are methyltransferase (M) domain 3. The Carrier 4 domain maps to 5503–5577 (PPRNSVEATV…DLAAVIQRNS (75 aa)). At serine 5537 the chain carries O-(pantetheine 4'-phosphoryl)serine. Residues 5592–6023 (VPQSFAQGRL…QPLTPLAVLP (432 aa)) form a condensation 5 region. Positions 6075 to 6478 (TYAQLDQQSD…SHNSVQDAAV (404 aa)) are adenylation 5. Residues 6545–6729 (WTSMYDGSEI…ELEANEEELL (185 aa)) form a methyltransferase (M) domain 4 region. The Carrier 5 domain maps to 7000–7074 (APRNEIEAIL…DLAASIQRES (75 aa)). Serine 7034 carries the O-(pantetheine 4'-phosphoryl)serine modification. The interval 7092–7517 (SFAQGRLWFL…VLDQPLTPIS (426 aa)) is condensation 6. The segment at 7572–7976 (TYAQLDEQSD…DHKSVLAATV (405 aa)) is adenylation 6. Positions 8060–8134 (PPRDEVEAVL…DLADIIRRGS (75 aa)) constitute a Carrier 6 domain. Serine 8094 is modified (O-(pantetheine 4'-phosphoryl)serine). The tract at residues 8152 to 8582 (SFAQGRLWFL…PKQRLMAMPI (431 aa)) is condensation 7. The tract at residues 8633–9038 (TYADLDGQSN…GHDLVHDAAV (406 aa)) is adenylation 7. Residues 9111 to 9288 (PVNEMKEWLD…EESEEELLVD (178 aa)) are methyltransferase (M) domain 5. Positions 9555–9629 (APRNDTEIVL…DLAASIEQGS (75 aa)) constitute a Carrier 7 domain. Serine 9589 bears the O-(pantetheine 4'-phosphoryl)serine mark. Residues 9647 to 10077 (SYAQGRLWFL…QVSISTMPLT (431 aa)) are condensation 8. The interval 10127–10529 (SYTSLDQKSE…GNKAIHDAAV (403 aa)) is adenylation 8. Residues 10588 to 10768 (RDFTSWTSMY…DQIRQEVARL (181 aa)) form a methyltransferase (M) domain 6 region. The 75-residue stretch at 11052–11126 (APRNDIEAVL…DLADVVQTGS (75 aa)) folds into the Carrier 8 domain. Serine 11086 bears the O-(pantetheine 4'-phosphoryl)serine mark. The interval 11144-11567 (SFSQGRLWFL…HANLATLPLT (424 aa)) is condensation 9. The tract at residues 11616-12019 (TYTELDERSS…RDPAISDSAV (404 aa)) is adenylation 9. The region spanning 12124 to 12198 (APRNDIETII…QLAASIQQGS (75 aa)) is the Carrier 9 domain. Residue serine 12158 is modified to O-(pantetheine 4'-phosphoryl)serine. Positions 12216–12645 (SFAQGRLWFL…IAISTMPLVD (430 aa)) are condensation 10. An adenylation 10 region spans residues 12696 to 13096 (TYAELDQQSD…SDSSINDAVV (401 aa)). The methyltransferase (M) domain 7 stretch occupies residues 13162–13343 (YDGSLIPREE…EDDEEELLVD (182 aa)). Positions 13620–13694 (APRTEIEVVL…DLAASILQGS (75 aa)) constitute a Carrier 10 domain. Serine 13654 carries the post-translational modification O-(pantetheine 4'-phosphoryl)serine. The interval 13710–14143 (EQSFAQGRLW…PQSPIATMPL (434 aa)) is condensation 11. Positions 14194-14598 (TYAELDRLSD…SENSVTDAAV (405 aa)) are adenylation 11. Residues 14695–14769 (APRNETEAAI…SLAGKLEQQQ (75 aa)) enclose the Carrier 11 domain. An O-(pantetheine 4'-phosphoryl)serine modification is found at serine 14729. Residues 14814 to 15158 (DMYPATQTQI…HPEAEIEGQQ (345 aa)) are condensation 12. The segment at 15169–15224 (QARQANGHAPNGTNGTNGTNGTNGANGTNGTNGTNGTHANGINGSNGVNGRDSNVV) is disordered. Over residues 15173–15211 (ANGHAPNGTNGTNGTNGTNGANGTNGTNGTNGTHANGIN) the composition is skewed to low complexity. Residues 15213–15224 (SNGVNGRDSNVV) show a composition bias toward polar residues.

It belongs to the NRP synthetase family. Requires pantetheine 4'-phosphate as cofactor.

Nonribosomal peptide synthetase; part of the gene cluster that mediates the biosynthesis of the cycloundecapeptide cyclosporin A (CsA), a compound with antifungal activity used as an immunosuppressant drug. Cyclosporin A contains three non-proteinogenic amino acids: D-alanine, alpha-amino butyric acid and the unusual amino acid (4R)-4-[(E)-2-butenyl]-4-methyl-l-threonine (Bmt). The nonribosomal peptide synthetase (NRPS) catalyzes the elongation and cyclization of the undecapeptide chain. SimA contains 11 modules responsible for sequential uptake of substrates and chain elongation. In addition to the core condensation-adenylation-thiolation (C-A-T) domains present in each module, seven modules contain an additional N-methylation (M) domain (modules 2, 3, 4, 5, 7, 8, and 10). The terminal C domain (C12 or Ct) is implicated in cyclization of the peptidyl chains to form CsA. The first module (A1) takes up D-Ala which is provided by the alanine racemase simB. The A2, A3, A8, and A10 domains have the same substrate-specific signature for recognition of leucine residues. The unusual amino acid (4R)-4-[(E)-2-butenyl]-4-methyl-l-threonine (Bmt) is recognized by the fifth module (A5). The A11 domain recognizes L-Ala. The PKS simG mediates the biosynthesis of 3R-hydroxyl-4R-methyl-6E-octenoic acid from acetyl coenzyme A (acetyl-CoA), malonyl-CoA, and S-adenosylmethionine, and 3R-hydroxyl-4R-methyl-6E-octenoic acid is then be repeatedly oxidized by simI to 3R-hydroxy-4R-methyl-2-keto-6E-octenoic acid. The latter is likely converted to Bmt through the action of the aminotransferase SimJ. This is Cyclosporin synthetase simA from Tolypocladium inflatum (Cyclosporin fungus).